Here is a 641-residue protein sequence, read N- to C-terminus: Chaperone protein DnaK (641 aa).

Phosphothreonine; by autocatalysis is present on threonine 200. A compositionally biased stretch (low complexity) spans 606-623; that stretch reads AEQGGNADAASGNAQASK. A disordered region spans residues 606–627; that stretch reads AEQGGNADAASGNAQASKAADD.

It belongs to the heat shock protein 70 family.

Functionally, acts as a chaperone. This Xanthomonas euvesicatoria pv. vesicatoria (strain 85-10) (Xanthomonas campestris pv. vesicatoria) protein is Chaperone protein DnaK.